The sequence spans 278 residues: MPELPEVETSRRGIEPYLVGQTILYAVVRNARLRWPVSDEILTLSDQPVLSVQRRAKYLLLELPKGWIIIHLGMSGSLRVLSEETAAEKHDHVDLVVSNGKILRYTDPRRFGAWLWAKDLETSNVLAHLGPEPLSDEFTAQYLFDKSRNKRTLIKPWLMDNKVVVGVGNIYASESLFAAGILPDRAAGSLTDAESVLLVATIKAVLLHSIEQGGTTLRDFLQSDGKPGYFAQELQVYGRAGEPCRQCGHPIEIAKHGQRSTFFCRHCQFRPIWPIMLW.

P2 functions as the Schiff-base intermediate with DNA in the catalytic mechanism. E3 acts as the Proton donor in catalysis. K57 serves as the catalytic Proton donor; for beta-elimination activity. 3 residues coordinate DNA: H90, R109, and K150. An FPG-type zinc finger spans residues 235 to 269; that stretch reads QVYGRAGEPCRQCGHPIEIAKHGQRSTFFCRHCQF. Catalysis depends on R259, which acts as the Proton donor; for delta-elimination activity.

Belongs to the FPG family. In terms of assembly, monomer. Zn(2+) is required as a cofactor.

The enzyme catalyses Hydrolysis of DNA containing ring-opened 7-methylguanine residues, releasing 2,6-diamino-4-hydroxy-5-(N-methyl)formamidopyrimidine.. It carries out the reaction 2'-deoxyribonucleotide-(2'-deoxyribose 5'-phosphate)-2'-deoxyribonucleotide-DNA = a 3'-end 2'-deoxyribonucleotide-(2,3-dehydro-2,3-deoxyribose 5'-phosphate)-DNA + a 5'-end 5'-phospho-2'-deoxyribonucleoside-DNA + H(+). Involved in base excision repair of DNA damaged by oxidation or by mutagenic agents. Acts as a DNA glycosylase that recognizes and removes damaged bases. Has a preference for oxidized purines, such as 7,8-dihydro-8-oxoguanine (8-oxoG). Has AP (apurinic/apyrimidinic) lyase activity and introduces nicks in the DNA strand. Cleaves the DNA backbone by beta-delta elimination to generate a single-strand break at the site of the removed base with both 3'- and 5'-phosphates. This Yersinia pestis (strain Pestoides F) protein is Formamidopyrimidine-DNA glycosylase.